The primary structure comprises 390 residues: Centrosomal protein of 44 kDa (390 aa).

Residues 11–195 (RNLEQVLRLL…ISEDTLSPIT (185 aa)) form a binds with microtubules and centrioles region. Positions 233–269 (EITALQTMLAECQENLKKLTSIEKRLDCLEQKMKGKV) form a coiled coil. Positions 322–348 (RKSEVERPASIPLSSGYSTASSDSTPR) are disordered. Residues Ser331 and Ser345 each carry the phosphoserine modification. The segment covering 335–345 (SSGYSTASSDS) has biased composition (low complexity). Thr346 carries the post-translational modification Phosphothreonine. Residues 361–385 (SEETTIQKMERMKKMFEETAELLKC) adopt a coiled-coil conformation.

As to quaternary structure, interacts with CROCC. Interacts with POC1B; the interaction is direct and recruits POC1B to centriolar microtubules. Binds to centriolar microtubules.

The protein localises to the cytoplasm. It localises to the cytoskeleton. The protein resides in the microtubule organizing center. It is found in the centrosome. Its subcellular location is the centriole. The protein localises to the spindle pole. It localises to the midbody. In terms of biological role, centriole-enriched microtubule-binding protein involved in centriole biogenesis. In collaboration with CEP295 and POC1B, is required for the centriole-to-centrosome conversion by ensuring the formation of bona fide centriole wall. Functions as a linker component that maintains centrosome cohesion. Associates with CROCC and regulates its stability and localization to the centrosome. The polypeptide is Centrosomal protein of 44 kDa (CEP44) (Homo sapiens (Human)).